The chain runs to 607 residues: uncharacterized protein (607 aa).

Disordered regions lie at residues 28–114 (GAER…KLRR) and 142–188 (DQER…NNSS). Positions 35–50 (SSHGSINSRSASPNKA) are enriched in polar residues. 2 stretches are compositionally biased toward basic and acidic residues: residues 90–102 (VNGE…DHDT) and 161–174 (KENK…KDLS). Residues 177–188 (SSSSMKKANNSS) show a composition bias toward low complexity. PHD-type zinc fingers lie at residues 263–312 (NDYC…CKHH) and 406–459 (PILC…HSDH).

This is an uncharacterized protein from Schizosaccharomyces pombe (strain 972 / ATCC 24843) (Fission yeast).